A 545-amino-acid chain; its full sequence is Membrane protein insertase YidC (545 aa).

4 consecutive transmembrane segments (helical) span residues 350–370, 424–444, 461–481, and 498–518; these read IIGNWGWAIIVLTIIVKAVLY, LPMLLQIPVFIGLYWALFASV, ADPYYILPIIMAATMFAQTYL, and PLVFSVMFFFFPAGLVLYWVV.

Belongs to the OXA1/ALB3/YidC family. Type 1 subfamily. In terms of assembly, interacts with the Sec translocase complex via SecD. Specifically interacts with transmembrane segments of nascent integral membrane proteins during membrane integration.

It is found in the cell inner membrane. Required for the insertion and/or proper folding and/or complex formation of integral membrane proteins into the membrane. Involved in integration of membrane proteins that insert both dependently and independently of the Sec translocase complex, as well as at least some lipoproteins. Aids folding of multispanning membrane proteins. The sequence is that of Membrane protein insertase YidC from Neisseria meningitidis serogroup B (strain ATCC BAA-335 / MC58).